A 150-amino-acid polypeptide reads, in one-letter code: 16.6 kDa heat shock protein (150 aa).

The sHSP domain occupies 31-150 (AERCPVLTNV…PQLKAIPISG (120 aa)).

Belongs to the small heat shock protein (HSP20) family. As to quaternary structure, may form oligomeric structures.

The protein resides in the cytoplasm. This is 16.6 kDa heat shock protein (HSP16.6) from Oryza sativa subsp. japonica (Rice).